We begin with the raw amino-acid sequence, 197 residues long: 3-isopropylmalate dehydratase small subunit (197 aa).

The protein belongs to the LeuD family. LeuD type 1 subfamily. Heterodimer of LeuC and LeuD.

It catalyses the reaction (2R,3S)-3-isopropylmalate = (2S)-2-isopropylmalate. The protein operates within amino-acid biosynthesis; L-leucine biosynthesis; L-leucine from 3-methyl-2-oxobutanoate: step 2/4. In terms of biological role, catalyzes the isomerization between 2-isopropylmalate and 3-isopropylmalate, via the formation of 2-isopropylmaleate. In Streptomyces avermitilis (strain ATCC 31267 / DSM 46492 / JCM 5070 / NBRC 14893 / NCIMB 12804 / NRRL 8165 / MA-4680), this protein is 3-isopropylmalate dehydratase small subunit.